The primary structure comprises 492 residues: Catalase isozyme C (492 aa).

R62 lines the heme pocket. H65 is a catalytic residue. R102 provides a ligand contact to heme. The active site involves N138. F151 lines the heme pocket. The residue at position 210 (Y210) is a Phosphotyrosine; by STRK1. The segment at residues 325 to 348 is a cross-link (3-(S-cysteinyl)-tyrosine (Cys-Tyr)); sequence CPGIIVPGIYYSDDKLLQTRIFSY. 3 residues coordinate heme: R344, Y348, and R355. The Peroxisome targeting signal motif lies at 484 to 492; the sequence is SRLSAKPSM.

It belongs to the catalase family. As to quaternary structure, homotetramer. Interacts with GLO1 and GLO4; these interactions are disturbed by alpha-hydroxy-2-pyridinemethanesulfonic acid (HPMS) and salicylic acid (SA). Interacts with STRK1 at the plasma membrane. Heme is required as a cofactor. In terms of processing, activated by STRK1-mediated phosphorylation at Tyr-210 upon salt and oxidative stress. Highly expressed in mature leaves. Mainly expressed in leaf blades, stems, panicles, leaf sheaths, and culms, but barely in roots.

It localises to the peroxisome. The protein resides in the glyoxysome. The protein localises to the cell membrane. It carries out the reaction 2 H2O2 = O2 + 2 H2O. Strongly inhibited by beta-mercaptoethanol, sodium azide and potassium cyanide. Slightly repressed by 3-amino-1,2,4-triazole (3-AT). Activity is repressed proportionally to increased concentration of NaCl, KCl, LiCl and MgCl(2). Its function is as follows. Occurs in almost all aerobically respiring organisms and serves to protect cells from the toxic effects of hydrogen peroxide. Responsible for the redox homeostasis in leaves. Prevents nitric oxide (NO) accumulation and subsequent NO-mediated leaf cell death as well as the S-nitrosylation of specific proteins (e.g. glyceraldehyde 3-phosphate dehydrogenase and thioredoxin) by degrading H(2)O(2). Involved in photorespiration. Promotes drought stress tolerance and recovery. Involved in NO-mediated enhanced tolerance to zinc oxide nanoparticles (ZnO NPs)-induced phytotoxicity. Participates in melatonin-mediated detoxification. The polypeptide is Catalase isozyme C (Oryza sativa subsp. japonica (Rice)).